The chain runs to 115 residues: U3-lycotoxin-Ls1c (115 aa).

The first 20 residues, 1–20 (MKFVLLFGVLLVTLFSYSSA), serve as a signal peptide directing secretion. Residues 21 to 44 (EMLDDFDQADEDELLSLIEKEEAR) constitute a propeptide that is removed on maturation. Disulfide bonds link C48–C63, C55–C72, C62–C87, and C74–C85.

Belongs to the neurotoxin 19 (CSTX) family. 01 subfamily. Expressed by the venom gland.

The protein resides in the secreted. This chain is U3-lycotoxin-Ls1c, found in Lycosa singoriensis (Wolf spider).